A 202-amino-acid polypeptide reads, in one-letter code: Small ribosomal subunit protein uS4c (202 aa).

The S4 RNA-binding domain maps to 90 to 154; it reads MRLDNILFRL…SQSIITKNLN (65 aa).

The protein belongs to the universal ribosomal protein uS4 family. In terms of assembly, part of the 30S ribosomal subunit. Contacts protein S5. The interaction surface between S4 and S5 is involved in control of translational fidelity.

Its subcellular location is the plastid. The protein resides in the chloroplast. Functionally, one of the primary rRNA binding proteins, it binds directly to 16S rRNA where it nucleates assembly of the body of the 30S subunit. In terms of biological role, with S5 and S12 plays an important role in translational accuracy. The polypeptide is Small ribosomal subunit protein uS4c (rps4) (Monoclea forsteri (Liverwort)).